The sequence spans 158 residues: MTTTIPTSKSACSVTTRPGNAAVDYGGAQIRAYLHHLATVVTIRGEIDAANVEQISEHVRRFSLGTNPMVLDLSELSHFSGAGISLLCILDEDCRAAGVQWALVASPAVVEQLGGRCDQGEHESMFPMARSVHKALHDLADAIDRRRQLVLPLISRSA.

Threonine 2 carries the post-translational modification Phosphothreonine; by PknD. The STAS domain maps to 28 to 139; sequence AQIRAYLHHL…RSVHKALHDL (112 aa).

It belongs to the anti-sigma-factor antagonist family. As to quaternary structure, interacts with Rv2638. Phosphorylation abolishes binding to Rv2638. Phosphorylated on Thr-2 by the serine/threonine-protein kinase PknD. Also phosphorylated to a lesser extent by PknB and PknE. Dephosphorylated by PstP.

Its activity is regulated as follows. Regulated by PknD under osmotic stress. In terms of biological role, part of a signaling pathway that enables adaptation to osmotic stress through cell wall remodeling and virulence factor production. Unphosphorylated OprA forms a complex with the anti-anti-sigma-factor paralog Rv2638 that dissociates on OprA phosphorylation by PknD. Phosphorylation of OprA may stimulate the release of SigF from an inhibitory complex and enable the transcription of osmotically regulated genes, such as oprA and the ESX-1-associated virulence factor espA. The chain is Osmosensory protein A from Mycobacterium tuberculosis (strain ATCC 25618 / H37Rv).